Reading from the N-terminus, the 429-residue chain is Metacaspase-1A (429 aa).

Positions Met-1 to Gly-68 are disordered. A compositionally biased stretch (gly residues) spans Ser-8–Pro-19. Residues Gly-20–Gln-45 are compositionally biased toward low complexity. Polar residues predominate over residues His-46 to Asn-62. Catalysis depends on residues His-220 and Cys-276.

Belongs to the peptidase C14B family.

Its function is as follows. Involved in cell death (apoptosis). In Aspergillus clavatus (strain ATCC 1007 / CBS 513.65 / DSM 816 / NCTC 3887 / NRRL 1 / QM 1276 / 107), this protein is Metacaspase-1A (casA).